The chain runs to 458 residues: MEFDTIAAISTALGEGAIAIVRVSGDDAVEKVDRIFKGKDLTEVPSHTIHYGHIVDLDTNQVIEEVMVSIMRAPRTFTRENIVEINCHGGLVSVNKVLQLILAQGVRLAEPGEFTKRAFLNGRIDLSQAEAVMDLIRAKTDRAMNVAINQMEGRLSKLIGLLRQEILETLAHVEVNIDYPEYDDVEEMTHNILIEKATHVRSEIEKILETSKQGKILREGIATAIIGRPNVGKSSLLNSLVQEKKAIVTDIAGTTRDVIEEYVNVRGVPLKLIDTAGIRETEDVVERIGVERSKEMMSQADLVLVVVNYSEALTNEDEDLFRAVQGKDFIVIVNKTDLPQAIDMERVTELAAGNRVITTSLIEEQGIDELEKAIADLFFEGTIDSADMTYVSNARHIGLLTQAGKTIGDAVEAIENGVPIDMVQIDLTRTWEILGEITGDTVHESLIDQLFSQFCLGK.

(6S)-5-formyl-5,6,7,8-tetrahydrofolate is bound by residues arginine 22, glutamate 84, and arginine 123. Positions 220–379 constitute a TrmE-type G domain; the sequence is GIATAIIGRP…LEKAIADLFF (160 aa). Asparagine 230 lines the K(+) pocket. Residues 230-235, 249-255, and 274-277 each bind GTP; these read NVGKSS, TDIAGTT, and DTAG. Residue serine 234 participates in Mg(2+) binding. K(+) contacts are provided by threonine 249, isoleucine 251, and threonine 254. Threonine 255 lines the Mg(2+) pocket. Residue lysine 458 participates in (6S)-5-formyl-5,6,7,8-tetrahydrofolate binding.

Belongs to the TRAFAC class TrmE-Era-EngA-EngB-Septin-like GTPase superfamily. TrmE GTPase family. As to quaternary structure, homodimer. Heterotetramer of two MnmE and two MnmG subunits. K(+) is required as a cofactor.

It localises to the cytoplasm. Exhibits a very high intrinsic GTPase hydrolysis rate. Involved in the addition of a carboxymethylaminomethyl (cmnm) group at the wobble position (U34) of certain tRNAs, forming tRNA-cmnm(5)s(2)U34. The protein is tRNA modification GTPase MnmE of Bacillus cereus (strain ATCC 14579 / DSM 31 / CCUG 7414 / JCM 2152 / NBRC 15305 / NCIMB 9373 / NCTC 2599 / NRRL B-3711).